A 195-amino-acid chain; its full sequence is Protein GrpE (195 aa).

The span at 1-20 (MSSKEQKTPDEQVLDQKEAA) shows a compositional bias: basic and acidic residues. The disordered stretch occupies residues 1–40 (MSSKEQKTPDEQVLDQKEAAKGQQADAAPETADVADPRDA).

This sequence belongs to the GrpE family. As to quaternary structure, homodimer.

The protein localises to the cytoplasm. Functionally, participates actively in the response to hyperosmotic and heat shock by preventing the aggregation of stress-denatured proteins, in association with DnaK and GrpE. It is the nucleotide exchange factor for DnaK and may function as a thermosensor. Unfolded proteins bind initially to DnaJ; upon interaction with the DnaJ-bound protein, DnaK hydrolyzes its bound ATP, resulting in the formation of a stable complex. GrpE releases ADP from DnaK; ATP binding to DnaK triggers the release of the substrate protein, thus completing the reaction cycle. Several rounds of ATP-dependent interactions between DnaJ, DnaK and GrpE are required for fully efficient folding. This is Protein GrpE from Pectobacterium carotovorum subsp. carotovorum (strain PC1).